We begin with the raw amino-acid sequence, 197 residues long: HTH-type transcriptional regulator BetI (197 aa).

In terms of domain architecture, HTH tetR-type spans 8–68 (PIRRQQLIQA…ATMRHLMNAL (61 aa)). A DNA-binding region (H-T-H motif) is located at residues 31-50 (SIALIARLAGVSNGIISHYF).

The protein operates within amine and polyamine biosynthesis; betaine biosynthesis via choline pathway [regulation]. In terms of biological role, repressor involved in the biosynthesis of the osmoprotectant glycine betaine. It represses transcription of the choline transporter BetT and the genes of BetAB involved in the synthesis of glycine betaine. The protein is HTH-type transcriptional regulator BetI of Pseudomonas savastanoi pv. phaseolicola (strain 1448A / Race 6) (Pseudomonas syringae pv. phaseolicola (strain 1448A / Race 6)).